Consider the following 586-residue polypeptide: Clathrin heavy chain linker domain-containing protein 1 (586 aa).

Residues 174–232 adopt a coiled-coil conformation; that stretch reads MNLDALTKYMKHLEDKYAEIKQAMLIKYVPAQRKADLDEEMIVLLKRRDVAENLNKKLQ.

This is Clathrin heavy chain linker domain-containing protein 1 (CLHC1) from Homo sapiens (Human).